The chain runs to 346 residues: MVSSNFYKNLGPRKLTAIVDFLHDIIEPTKIYEDIDIYDIKILQEASPNDISFLSNPKYSEFLKTTKAAACIVPKNFTEEVNQNTVLIHAENSYFAYSKLIDFFYAPIKSYSTKIMKSAIIADSATIGKNCYIGHNVVIEDDVIIGDNSIIDAGTFIGRGVNIGKNARIEQHVSINYAIIGDDVVILVGAKIGQDGFGFSTEKGVHHKIFHIGIVKIGNNVEIGSNTTIDRGALQDTIIEDLCRIDNLVQIGHGVKIGKGSIIVAQAGIAGSSAIGKYCALGGQVGIAGHLNIGDGTQVAAQGGVAQNIEEGKIVGGSPAVPIMDWHRQSIIMKQLVKTSNSKLKK.

Residue histidine 253 is the Proton acceptor of the active site.

It belongs to the transferase hexapeptide repeat family. LpxD subfamily. As to quaternary structure, homotrimer.

The enzyme catalyses a UDP-3-O-[(3R)-3-hydroxyacyl]-alpha-D-glucosamine + a (3R)-hydroxyacyl-[ACP] = a UDP-2-N,3-O-bis[(3R)-3-hydroxyacyl]-alpha-D-glucosamine + holo-[ACP] + H(+). It participates in bacterial outer membrane biogenesis; LPS lipid A biosynthesis. Functionally, catalyzes the N-acylation of UDP-3-O-acylglucosamine using 3-hydroxyacyl-ACP as the acyl donor. Is involved in the biosynthesis of lipid A, a phosphorylated glycolipid that anchors the lipopolysaccharide to the outer membrane of the cell. The sequence is that of UDP-3-O-acylglucosamine N-acyltransferase from Rickettsia prowazekii (strain Madrid E).